A 151-amino-acid chain; its full sequence is Large ribosomal subunit protein bL9 (151 aa).

The protein belongs to the bacterial ribosomal protein bL9 family.

Binds to the 23S rRNA. This chain is Large ribosomal subunit protein bL9, found in Prochlorococcus marinus (strain MIT 9301).